The primary structure comprises 310 residues: N-acetyl-gamma-glutamyl-phosphate reductase (310 aa).

Residue cysteine 117 is part of the active site.

It belongs to the NAGSA dehydrogenase family. Type 2 subfamily.

The protein resides in the cytoplasm. It carries out the reaction N-acetyl-L-glutamate 5-semialdehyde + phosphate + NADP(+) = N-acetyl-L-glutamyl 5-phosphate + NADPH + H(+). It functions in the pathway amino-acid biosynthesis; L-arginine biosynthesis; N(2)-acetyl-L-ornithine from L-glutamate: step 3/4. In terms of biological role, catalyzes the NADPH-dependent reduction of N-acetyl-5-glutamyl phosphate to yield N-acetyl-L-glutamate 5-semialdehyde. The protein is N-acetyl-gamma-glutamyl-phosphate reductase of Rhizobium meliloti (strain 1021) (Ensifer meliloti).